A 443-amino-acid chain; its full sequence is Autophagy-related protein 13 homolog (443 aa).

2 disordered regions span residues 232 to 283 (AKKR…EEDH) and 308 to 333 (ANGT…KEPT). Over residues 240–253 (SVESATSAGSSTSR) the composition is skewed to polar residues. Basic and acidic residues predominate over residues 268–283 (EDSRHSDVQNSYEEDH). Residues 308–325 (ANGTKKNSSSTCLNSPKS) are compositionally biased toward polar residues.

This sequence belongs to the ATG13 family. Metazoan subfamily. Interacts with unc-51 (via C-terminus). Interacts with lgg-1; the interaction is direct.

The protein localises to the cytoplasm. Its subcellular location is the cytosol. It localises to the preautophagosomal structure. It is found in the perikaryon. The protein resides in the cell projection. The protein localises to the axon. Its function is as follows. Component of the unc-51/atg-13 complex required for autophagosome formation. Required for the degradation of germ cell specific P-granule components such as sepa-1 by autophagy in somatic cells. This ensures exclusive localization of the P-granules in germ cells. May function downstream of the let-363 (Tor) signaling pathway to mediate sepa-1 degradation. Plays a role in survival during limited food availability. In Caenorhabditis elegans, this protein is Autophagy-related protein 13 homolog.